A 431-amino-acid chain; its full sequence is Histidine--tRNA ligase (431 aa).

This sequence belongs to the class-II aminoacyl-tRNA synthetase family.

It localises to the cytoplasm. It catalyses the reaction tRNA(His) + L-histidine + ATP = L-histidyl-tRNA(His) + AMP + diphosphate + H(+). The protein is Histidine--tRNA ligase (hisS) of Pyrococcus horikoshii (strain ATCC 700860 / DSM 12428 / JCM 9974 / NBRC 100139 / OT-3).